Consider the following 62-residue polypeptide: Protein DsrB (62 aa).

This sequence belongs to the DsrB family.

This is Protein DsrB from Escherichia fergusonii (strain ATCC 35469 / DSM 13698 / CCUG 18766 / IAM 14443 / JCM 21226 / LMG 7866 / NBRC 102419 / NCTC 12128 / CDC 0568-73).